The sequence spans 162 residues: MIOREX complex component 11 (162 aa).

The transit peptide at 1–45 (MLPPTIRISGLAKTLHIPSRSPLQALKGSFILLNKRKFHYSPFIL) directs the protein to the mitochondrion. The Mitochondrial matrix segment spans residues 46-84 (QEKVQSSNHTIRSDTKLWKRLLKITGKQAHQFKDKPFSH). A helical transmembrane segment spans residues 85–105 (IFAFLFLHELSAILPLPIFFF). Residues 106-124 (IFHSLDWTPTGLPGEYLQK) are Mitochondrial intermembrane-facing. A helical transmembrane segment spans residues 125 to 142 (GSHVAASIFAKLGYNLPL). Residues 143–162 (EKVSKTLLDGAAAYAVVKVC) are Mitochondrial matrix-facing.

Belongs to the MRX11 family. As to quaternary structure, associates with the mitochondrial ribosome.

It is found in the mitochondrion. It localises to the mitochondrion inner membrane. In terms of biological role, component of MIOREX complexes, large expressome-like assemblies of ribosomes with factors involved in all the steps of post-transcriptional gene expression. The protein is MIOREX complex component 11 (mrx11) of Schizosaccharomyces pombe (strain 972 / ATCC 24843) (Fission yeast).